The sequence spans 328 residues: Hairy/enhancer-of-split related with YRPW motif-like protein (328 aa).

The disordered stretch occupies residues 1 to 54 (MKRPREPSGSDSESDGPIDVGREGELSQMARPLSTPSPSQMQARKKRRGIIEKR). The interval 42 to 111 (QARKKRRGII…GGTGFFDARA (70 aa)) is transcriptional repression and interaction with NCOR1 and SIN3A. The bHLH domain maps to 43-98 (ARKKRRGIIEKRRRDRINSSLSELRRLVPTAFEKQGSSKLEKAEVLQMTVDHLKML). An Orange domain is found at 116-153 (FRSIGFRECLTEVIRYLGVLEGPSSRADPVRIRLLSHL). The segment at 236–272 (LLPSRGASSTRRARPLERPAAPLPAAPSGRATRGSHM) is disordered.

The protein belongs to the HEY family. Self-associates. Interacts with GATA4, GATA6, HES1, HEY1 and HEY2. Interacts with HDAC1, NCOR1 and SIN3A.

The protein resides in the nucleus. Functionally, downstream effector of Notch signaling which may be required for cardiovascular development. Transcriptional repressor which binds preferentially to the canonical E box sequence 5'-CACGTG-3'. Represses transcription by the cardiac transcriptional activators GATA4 and GATA6. The sequence is that of Hairy/enhancer-of-split related with YRPW motif-like protein (HEYL) from Bos taurus (Bovine).